We begin with the raw amino-acid sequence, 420 residues long: Tyrosine--tRNA ligase 2 (420 aa).

Position 34 (Tyr-34) interacts with L-tyrosine. The short motif at 39-48 (PTGDSMHIGH) is the 'HIGH' region element. Residues Tyr-168 and Gln-172 each coordinate L-tyrosine. Residues 230–234 (KFGKS) carry the 'KMSKS' region motif. Lys-233 contributes to the ATP binding site. An S4 RNA-binding domain is found at 352–418 (KNIVEWLVDL…GKKNYSLVKL (67 aa)).

The protein belongs to the class-I aminoacyl-tRNA synthetase family. TyrS type 1 subfamily. Homodimer.

Its subcellular location is the cytoplasm. It carries out the reaction tRNA(Tyr) + L-tyrosine + ATP = L-tyrosyl-tRNA(Tyr) + AMP + diphosphate + H(+). In terms of biological role, catalyzes the attachment of tyrosine to tRNA(Tyr) in a two-step reaction: tyrosine is first activated by ATP to form Tyr-AMP and then transferred to the acceptor end of tRNA(Tyr). This chain is Tyrosine--tRNA ligase 2, found in Bacillus cereus (strain ATCC 14579 / DSM 31 / CCUG 7414 / JCM 2152 / NBRC 15305 / NCIMB 9373 / NCTC 2599 / NRRL B-3711).